The chain runs to 268 residues: 4-hydroxy-tetrahydrodipicolinate reductase (268 aa).

An NAD(+)-binding site is contributed by 8–13 (GAAGRM). Position 36 (R36) interacts with NADP(+). NAD(+) contacts are provided by residues 99 to 101 (GTT) and 123 to 126 (AANF). H156 functions as the Proton donor/acceptor in the catalytic mechanism. H157 serves as a coordination point for (S)-2,3,4,5-tetrahydrodipicolinate. The active-site Proton donor is K160. Residue 166-167 (GT) participates in (S)-2,3,4,5-tetrahydrodipicolinate binding.

It belongs to the DapB family.

Its subcellular location is the cytoplasm. It carries out the reaction (S)-2,3,4,5-tetrahydrodipicolinate + NAD(+) + H2O = (2S,4S)-4-hydroxy-2,3,4,5-tetrahydrodipicolinate + NADH + H(+). The catalysed reaction is (S)-2,3,4,5-tetrahydrodipicolinate + NADP(+) + H2O = (2S,4S)-4-hydroxy-2,3,4,5-tetrahydrodipicolinate + NADPH + H(+). It participates in amino-acid biosynthesis; L-lysine biosynthesis via DAP pathway; (S)-tetrahydrodipicolinate from L-aspartate: step 4/4. In terms of biological role, catalyzes the conversion of 4-hydroxy-tetrahydrodipicolinate (HTPA) to tetrahydrodipicolinate. The polypeptide is 4-hydroxy-tetrahydrodipicolinate reductase (Pseudomonas fluorescens (strain ATCC BAA-477 / NRRL B-23932 / Pf-5)).